We begin with the raw amino-acid sequence, 42 residues long: Tachystatin-B1 (42 aa).

Intrachain disulfides connect Cys-4-Cys-20, Cys-11-Cys-25, and Cys-19-Cys-37.

Granular hemocytes, small secretory granules.

The protein localises to the secreted. In terms of biological role, exhibits stronger antimicrobial activity against the Gram-positive bacteria (S.aureus (IC(50) is 7.4 ug/ml)) and fungi (C.albicans (IC(50) is 3.0 ug/ml) and P.pastoris (IC(50) is 0.1 ug/ml)) than Gram-negative bacteria (E.coli no inhibition at 100 ug/ml). Binds to chitin (4.3 uM are required to obtain 50% of binding). Does not cause hemolysis on sheep erythrocytes. Has no blocking activity on the P-type calcium channel. This chain is Tachystatin-B1, found in Tachypleus tridentatus (Japanese horseshoe crab).